We begin with the raw amino-acid sequence, 117 residues long: Large ribosomal subunit protein bL19 (117 aa).

It belongs to the bacterial ribosomal protein bL19 family.

Functionally, this protein is located at the 30S-50S ribosomal subunit interface and may play a role in the structure and function of the aminoacyl-tRNA binding site. The sequence is that of Large ribosomal subunit protein bL19 from Blochmanniella floridana.